The chain runs to 689 residues: Glycine--tRNA ligase beta subunit (689 aa).

The protein belongs to the class-II aminoacyl-tRNA synthetase family. Tetramer of two alpha and two beta subunits.

It localises to the cytoplasm. It carries out the reaction tRNA(Gly) + glycine + ATP = glycyl-tRNA(Gly) + AMP + diphosphate. This chain is Glycine--tRNA ligase beta subunit, found in Actinobacillus pleuropneumoniae serotype 3 (strain JL03).